The chain runs to 267 residues: Protein isy-1 (267 aa).

A coiled-coil region spans residues leucine 175 to aspartate 204. The interval glutamine 195–leucine 221 is disordered.

This sequence belongs to the ISY1 family. In terms of tissue distribution, ubiquitously expressed.

The protein localises to the nucleus. Its function is as follows. Regulates the processing of the mir-60 microRNA (miRNA), which in turn negatively regulates the expression of the transcription factor zip-10. Does not affect the splicing of zip-10. The sequence is that of Protein isy-1 from Caenorhabditis elegans.